The following is a 633-amino-acid chain: Chitinase 2 (633 aa).

The 452-residue stretch at 151–602 (PKLSAYITDW…NAAREGLGYV (452 aa)) folds into the GH18 domain. Chitin is bound by residues 275–276 (QN) and 306–309 (GGWS). The Proton donor role is filled by Glu349. Chitin-binding positions include Tyr350, 422–425 (MSYD), and Trp582.

The protein belongs to the glycosyl hydrolase 18 family. As to quaternary structure, semipurified toxin complex consists of at least YenA1-YenA2-YenB-YenC1-YenC2-Chi1-Chi2. The Yen-TC:K9 subcomplex is about 26 nm tall and 22 nm in diameter with 5-fold symmetry and 5 copies of YenA1, YenA2, Chi1 and Chi2; the chitinase subunits may be solvent accessible on the exterior the complex. The Yen-TC:K9 subcomplex has no insecticidal activity. The native complex with additional YenB, YenC1 and YenC2 subunits is 16 nm taller and is insecticidal; the toxicity-conferring subunits are present at about 1 copy each.

Its subcellular location is the secreted. It catalyses the reaction Random endo-hydrolysis of N-acetyl-beta-D-glucosaminide (1-&gt;4)-beta-linkages in chitin and chitodextrins.. Its activity is regulated as follows. Toxin complex is secreted when grown at 25 degrees Celsius or less; at higher temperatures the proteins are present intracellularly but not secreted. In terms of biological role, part of an orally active toxin complex (TC) with strong insecticidal effects on larvae of the Coleoptera Costelytra zealandica, Acrossidius tasmania and Adoryphorus couloni and some Lepidoptera larvae. The TC has an endochitinase activity. This subunit might aid infection by degradation of the larval peritrophic membrane. This Yersinia entomophaga protein is Chitinase 2.